The chain runs to 505 residues: Glycerol kinase (505 aa).

Threonine 12 provides a ligand contact to ADP. Residues threonine 12, threonine 13, and serine 14 each contribute to the ATP site. Threonine 12 contacts sn-glycerol 3-phosphate. Arginine 16 contributes to the ADP binding site. Positions 82, 83, 134, and 249 each coordinate sn-glycerol 3-phosphate. Positions 82, 83, 134, 249, and 250 each coordinate glycerol. Threonine 271 and glycine 315 together coordinate ADP. Residues threonine 271, glycine 315, glutamine 319, and glycine 416 each contribute to the ATP site. 2 residues coordinate ADP: glycine 416 and asparagine 420.

It belongs to the FGGY kinase family.

The catalysed reaction is glycerol + ATP = sn-glycerol 3-phosphate + ADP + H(+). It functions in the pathway polyol metabolism; glycerol degradation via glycerol kinase pathway; sn-glycerol 3-phosphate from glycerol: step 1/1. Its activity is regulated as follows. Inhibited by fructose 1,6-bisphosphate (FBP). In terms of biological role, key enzyme in the regulation of glycerol uptake and metabolism. Catalyzes the phosphorylation of glycerol to yield sn-glycerol 3-phosphate. This is Glycerol kinase from Mycolicibacterium gilvum (strain PYR-GCK) (Mycobacterium gilvum (strain PYR-GCK)).